We begin with the raw amino-acid sequence, 236 residues long: Ribose-5-phosphate isomerase A (236 aa).

Residues 33-36, 90-93, and 103-106 each bind substrate; these read TGST, DGAD, and KGGG. Glutamate 112 serves as the catalytic Proton acceptor. Residue lysine 130 participates in substrate binding.

Belongs to the ribose 5-phosphate isomerase family. Homodimer.

It catalyses the reaction aldehydo-D-ribose 5-phosphate = D-ribulose 5-phosphate. The protein operates within carbohydrate degradation; pentose phosphate pathway; D-ribose 5-phosphate from D-ribulose 5-phosphate (non-oxidative stage): step 1/1. Its function is as follows. Catalyzes the reversible conversion of ribose-5-phosphate to ribulose 5-phosphate. The sequence is that of Ribose-5-phosphate isomerase A from Trichormus variabilis (strain ATCC 29413 / PCC 7937) (Anabaena variabilis).